A 256-amino-acid chain; its full sequence is MVAPSGAMSDSENSSSSSSDAEELARCREAATPAWGLEQRPGAAERPEAGAADKQAPTPQPSRRHEVNQHEEDGNDLRTTPEFRAHVAKKLGALLDSSIAIAEVWKKSQKAKMQQVAKEEDGFRLFFTSIPGGHKKEASPRPCRKRQPPSSSEDSDEELQRCREAAVSASDILQESAIHCPAKAEEKKKLKKKAKKKVDNADLAAAPGLEQVKEAGVVNGDPVSLGIQKKRKKKAKKSREAPLCPPAECAAAKPEN.

Positions 1–19 (MVAPSGAMSDSENSSSSSS) are enriched in low complexity. Disordered regions lie at residues 1–83 (MVAP…TPEF), 127–163 (FTSI…QRCR), and 227–256 (IQKK…KPEN). Ser-62 carries the phosphoserine modification. Over residues 63-83 (RRHEVNQHEEDGNDLRTTPEF) the composition is skewed to basic and acidic residues. The residue at position 80 (Thr-80) is a Phosphothreonine. Ser-139 is modified (phosphoserine). The Nucleolar localization signal (NLS) motif lies at 228 to 235 (QKKRKKKA). The span at 228 to 237 (QKKRKKKAKK) shows a compositional bias: basic residues. Over residues 246-256 (PAECAAAKPEN) the composition is skewed to low complexity.

This sequence belongs to the CUSTOS family.

The protein localises to the nucleus envelope. Functionally, plays a role in the regulation of Wnt signaling pathway during early development. The protein is Protein CUSTOS of Mus musculus (Mouse).